The chain runs to 469 residues: MTQDNALLQAPELTLRDGSNSRKVFIKTYGCQMNVYDSTRMSDALARDGYEPTEDMEEADLVLLNTCHIREKAAEKVYSALGRLRDMKKKKAADGREMMIGVAGCVAQAEGEEILRRAPAVDVVIGPQTYHRLPEALRRAKEGQRVVDTDYAIEDKFEHLPIAESRKIRARGVTAFLTVQEGCDKFCTFCVVPYTRGSEVSRPVAQIVEEAEKLVEGGVREITLLGQNVNAWHGAGPRGEAWSLGDLLYRLAEIPGLARLRYTTSHPRDMDDRLIDAHRDLRALMPYLHLPVQSGSDRILKAMNRRHTAAEYLSLIARIRTVRPDIALSGDFITGFPGETDADFEDTLRLVEEVRYAQAFSFKYSTRPGTPGAELKDQVPEQIKAERLERLQALLLKQQQEFAESCIGKEIDLLLEKPGRMPEQLIGRSPWLQSVNVDAKASQIGDIIKVRITGTGNNSLFAERAEAAV.

An MTTase N-terminal domain is found at 22-142; sequence RKVFIKTYGC…LPEALRRAKE (121 aa). Positions 31, 67, 105, 183, 187, and 190 each coordinate [4Fe-4S] cluster. In terms of domain architecture, Radical SAM core spans 169–401; the sequence is RARGVTAFLT…QALLLKQQQE (233 aa). The region spanning 404–466 is the TRAM domain; the sequence is ESCIGKEIDL…NNSLFAERAE (63 aa).

This sequence belongs to the methylthiotransferase family. MiaB subfamily. In terms of assembly, monomer. [4Fe-4S] cluster is required as a cofactor.

The protein localises to the cytoplasm. It carries out the reaction N(6)-dimethylallyladenosine(37) in tRNA + (sulfur carrier)-SH + AH2 + 2 S-adenosyl-L-methionine = 2-methylsulfanyl-N(6)-dimethylallyladenosine(37) in tRNA + (sulfur carrier)-H + 5'-deoxyadenosine + L-methionine + A + S-adenosyl-L-homocysteine + 2 H(+). Functionally, catalyzes the methylthiolation of N6-(dimethylallyl)adenosine (i(6)A), leading to the formation of 2-methylthio-N6-(dimethylallyl)adenosine (ms(2)i(6)A) at position 37 in tRNAs that read codons beginning with uridine. This is tRNA-2-methylthio-N(6)-dimethylallyladenosine synthase from Rhizobium leguminosarum bv. trifolii (strain WSM2304).